The following is a 207-amino-acid chain: Peptidyl-tRNA hydrolase (207 aa).

Residue Y19 coordinates tRNA. The Proton acceptor role is filled by H24. TRNA-binding residues include F70, N72, and N118.

This sequence belongs to the PTH family. Monomer.

The protein localises to the cytoplasm. The catalysed reaction is an N-acyl-L-alpha-aminoacyl-tRNA + H2O = an N-acyl-L-amino acid + a tRNA + H(+). Functionally, hydrolyzes ribosome-free peptidyl-tRNAs (with 1 or more amino acids incorporated), which drop off the ribosome during protein synthesis, or as a result of ribosome stalling. In terms of biological role, catalyzes the release of premature peptidyl moieties from peptidyl-tRNA molecules trapped in stalled 50S ribosomal subunits, and thus maintains levels of free tRNAs and 50S ribosomes. In Synechococcus sp. (strain CC9311), this protein is Peptidyl-tRNA hydrolase.